The following is a 475-amino-acid chain: Ribulose bisphosphate carboxylase large chain (475 aa).

Positions 1-2 (MS) are excised as a propeptide. The residue at position 3 (P3) is an N-acetylproline. An N6,N6,N6-trimethyllysine modification is found at K14. Residues N123 and T173 each contribute to the substrate site. K175 (proton acceptor) is an active-site residue. K177 provides a ligand contact to substrate. 3 residues coordinate Mg(2+): K201, D203, and E204. K201 carries the post-translational modification N6-carboxylysine. The Proton acceptor role is filled by H294. Substrate contacts are provided by R295, H327, and S379.

Belongs to the RuBisCO large chain family. Type I subfamily. Heterohexadecamer of 8 large chains and 8 small chains; disulfide-linked. The disulfide link is formed within the large subunit homodimers. Requires Mg(2+) as cofactor. In terms of processing, the disulfide bond which can form in the large chain dimeric partners within the hexadecamer appears to be associated with oxidative stress and protein turnover.

It is found in the plastid. It localises to the chloroplast. It carries out the reaction 2 (2R)-3-phosphoglycerate + 2 H(+) = D-ribulose 1,5-bisphosphate + CO2 + H2O. The enzyme catalyses D-ribulose 1,5-bisphosphate + O2 = 2-phosphoglycolate + (2R)-3-phosphoglycerate + 2 H(+). Functionally, ruBisCO catalyzes two reactions: the carboxylation of D-ribulose 1,5-bisphosphate, the primary event in carbon dioxide fixation, as well as the oxidative fragmentation of the pentose substrate in the photorespiration process. Both reactions occur simultaneously and in competition at the same active site. In Physcomitrium patens (Spreading-leaved earth moss), this protein is Ribulose bisphosphate carboxylase large chain.